A 280-amino-acid polypeptide reads, in one-letter code: NAD-capped RNA hydrolase NudC (280 aa).

Position 83 (arginine 83) interacts with substrate. Residues cysteine 113, cysteine 116, cysteine 131, and cysteine 134 each contribute to the Zn(2+) site. Tyrosine 139 lines the substrate pocket. In terms of domain architecture, Nudix hydrolase spans 140 to 268 (PRVAPAIIVL…ASRRLLDDAL (129 aa)). A divalent metal cation-binding residues include alanine 177, glutamate 193, and glutamate 197. The short motif at 178–199 (GFVEPSETLEAAVHREVGEEVG) is the Nudix box element. Residue 211 to 218 (QPWPFPHS) coordinates substrate. Residue glutamate 238 participates in a divalent metal cation binding.

Belongs to the Nudix hydrolase family. NudC subfamily. In terms of assembly, homodimer. Requires Mg(2+) as cofactor. Mn(2+) is required as a cofactor. Zn(2+) serves as cofactor.

The catalysed reaction is a 5'-end NAD(+)-phospho-ribonucleoside in mRNA + H2O = a 5'-end phospho-adenosine-phospho-ribonucleoside in mRNA + beta-nicotinamide D-ribonucleotide + 2 H(+). The enzyme catalyses NAD(+) + H2O = beta-nicotinamide D-ribonucleotide + AMP + 2 H(+). It catalyses the reaction NADH + H2O = reduced beta-nicotinamide D-ribonucleotide + AMP + 2 H(+). MRNA decapping enzyme that specifically removes the nicotinamide adenine dinucleotide (NAD) cap from a subset of mRNAs by hydrolyzing the diphosphate linkage to produce nicotinamide mononucleotide (NMN) and 5' monophosphate mRNA. The NAD-cap is present at the 5'-end of some mRNAs and stabilizes RNA against 5'-processing. Has preference for mRNAs with a 5'-end purine. Catalyzes the hydrolysis of a broad range of dinucleotide pyrophosphates. This Deinococcus radiodurans (strain ATCC 13939 / DSM 20539 / JCM 16871 / CCUG 27074 / LMG 4051 / NBRC 15346 / NCIMB 9279 / VKM B-1422 / R1) protein is NAD-capped RNA hydrolase NudC.